The sequence spans 338 residues: Ferrochelatase (338 aa).

Positions 189 and 294 each coordinate Fe cation.

It belongs to the ferrochelatase family.

It localises to the cytoplasm. It catalyses the reaction heme b + 2 H(+) = protoporphyrin IX + Fe(2+). The protein operates within porphyrin-containing compound metabolism; protoheme biosynthesis; protoheme from protoporphyrin-IX: step 1/1. Its function is as follows. Catalyzes the ferrous insertion into protoporphyrin IX. This is Ferrochelatase from Pseudomonas putida (strain ATCC 700007 / DSM 6899 / JCM 31910 / BCRC 17059 / LMG 24140 / F1).